A 164-amino-acid polypeptide reads, in one-letter code: UPF0225 protein Shewana3_2159 (164 aa).

This sequence belongs to the UPF0225 family.

This is UPF0225 protein Shewana3_2159 from Shewanella sp. (strain ANA-3).